The sequence spans 190 residues: Shikimate kinase (190 aa).

13–18 (GAGKTT) provides a ligand contact to ATP. Thr-17 lines the Mg(2+) pocket. Substrate is bound by residues Asp-35, Arg-59, and Gly-81. An ATP-binding site is contributed by Arg-119. Arg-138 is a binding site for substrate.

It belongs to the shikimate kinase family. In terms of assembly, monomer. Requires Mg(2+) as cofactor.

The protein localises to the cytoplasm. It carries out the reaction shikimate + ATP = 3-phosphoshikimate + ADP + H(+). The protein operates within metabolic intermediate biosynthesis; chorismate biosynthesis; chorismate from D-erythrose 4-phosphate and phosphoenolpyruvate: step 5/7. Its function is as follows. Catalyzes the specific phosphorylation of the 3-hydroxyl group of shikimic acid using ATP as a cosubstrate. This chain is Shikimate kinase, found in Ralstonia nicotianae (strain ATCC BAA-1114 / GMI1000) (Ralstonia solanacearum).